The primary structure comprises 456 residues: Kynurenine 3-monooxygenase (456 aa).

It belongs to the aromatic-ring hydroxylase family. KMO subfamily. It depends on FAD as a cofactor.

The enzyme catalyses L-kynurenine + NADPH + O2 + H(+) = 3-hydroxy-L-kynurenine + NADP(+) + H2O. The protein operates within cofactor biosynthesis; NAD(+) biosynthesis; quinolinate from L-kynurenine: step 1/3. In terms of biological role, catalyzes the hydroxylation of L-kynurenine (L-Kyn) to form 3-hydroxy-L-kynurenine (L-3OHKyn). Required for synthesis of quinolinic acid. This is Kynurenine 3-monooxygenase from Xanthomonas campestris pv. campestris (strain 8004).